Reading from the N-terminus, the 232-residue chain is Vacuolar iron transporter homolog 1 (232 aa).

Residues 1 to 59 (MAIDLGCHVGCASPETKQEETADPTAAPVVVDDVEAAAGGRRPGDGGGVNYVARAQWLR) lie on the Cytoplasmic side of the membrane. Residues 60-80 (AAVLGANDGLVSVASLMVGVG) traverse the membrane as a helical segment. Over 81–89 (AANGTRRAM) the chain is Vacuolar. Residues 90 to 110 (LVSGLAGLVAGACSMAIGEFV) traverse the membrane as a helical segment. Topologically, residues 111 to 148 (SVYAQCDIQAAQIERARGGKDADGGEEEEELPSPTMAA) are cytoplasmic. Residues 149 to 169 (VASALSFAAGAALPLLAGGFV) form a helical membrane-spanning segment. Over 170 to 175 (RPWAAR) the chain is Vacuolar. A helical membrane pass occupies residues 176-196 (VAAVCAASSLGLAGFGVASAY). Over 197–208 (LGGAGVARSGVR) the chain is Cytoplasmic. The helical transmembrane segment at 209-229 (MLVGGWLAMAVTYGVLKLFGM) threads the bilayer. The Vacuolar segment spans residues 230–232 (HGV).

The protein belongs to the CCC1 family.

It localises to the vacuole membrane. It carries out the reaction Fe(2+)(in) = Fe(2+)(out). Functionally, probable vacuolar iron transporter that may be involved in the regulation of iron distribution throughout the plant. The sequence is that of Vacuolar iron transporter homolog 1 from Oryza sativa subsp. japonica (Rice).